A 293-amino-acid polypeptide reads, in one-letter code: MALRLDGKALAATVERRLTSVVDAHSKTVGQPPGLAVLRVGDDPASAVYVANKEKACARVGIASYGAHLAADTPADQVLSTIQSLNADPRVDGILLQLPLPKGLDERPLLEAIDPEKDADGLHTLNLGRLLKGEPGPRSCTPAGVMALLRSNGIDPAGQRAVVIGRSILVGQPMALMLQAANATVTVAHSRTADLAAHTREADIVVVAAGRPGMVGAEHVRPGAAVVDVGIHRKPEGGLCGDVVAEEVEPIAAALSPVPGGVGPMTVTMLLVNTVVAWCRRHGIDHELDDLIG.

Residues 165–167 (GRS), Ser190, and Ile231 contribute to the NADP(+) site.

Belongs to the tetrahydrofolate dehydrogenase/cyclohydrolase family. As to quaternary structure, homodimer.

It catalyses the reaction (6R)-5,10-methylene-5,6,7,8-tetrahydrofolate + NADP(+) = (6R)-5,10-methenyltetrahydrofolate + NADPH. The catalysed reaction is (6R)-5,10-methenyltetrahydrofolate + H2O = (6R)-10-formyltetrahydrofolate + H(+). It functions in the pathway one-carbon metabolism; tetrahydrofolate interconversion. Catalyzes the oxidation of 5,10-methylenetetrahydrofolate to 5,10-methenyltetrahydrofolate and then the hydrolysis of 5,10-methenyltetrahydrofolate to 10-formyltetrahydrofolate. In Parasynechococcus marenigrum (strain WH8102), this protein is Bifunctional protein FolD.